Consider the following 335-residue polypeptide: Tetraacyldisaccharide 4'-kinase (335 aa).

58–65 (TVGGVGKT) lines the ATP pocket.

The protein belongs to the LpxK family.

It carries out the reaction a lipid A disaccharide + ATP = a lipid IVA + ADP + H(+). It functions in the pathway glycolipid biosynthesis; lipid IV(A) biosynthesis; lipid IV(A) from (3R)-3-hydroxytetradecanoyl-[acyl-carrier-protein] and UDP-N-acetyl-alpha-D-glucosamine: step 6/6. Its function is as follows. Transfers the gamma-phosphate of ATP to the 4'-position of a tetraacyldisaccharide 1-phosphate intermediate (termed DS-1-P) to form tetraacyldisaccharide 1,4'-bis-phosphate (lipid IVA). This Caulobacter sp. (strain K31) protein is Tetraacyldisaccharide 4'-kinase.